Consider the following 1096-residue polypeptide: DNA-directed RNA polymerase subunit beta (1096 aa).

The tract at residues 1069 to 1096 (DLMQDVNPRRSTPSRPTYESLGSDYQED) is disordered.

This sequence belongs to the RNA polymerase beta chain family. In cyanobacteria the RNAP catalytic core is composed of 2 alpha, 1 beta, 1 beta', 1 gamma and 1 omega subunit. When a sigma factor is associated with the core the holoenzyme is formed, which can initiate transcription.

The enzyme catalyses RNA(n) + a ribonucleoside 5'-triphosphate = RNA(n+1) + diphosphate. Its function is as follows. DNA-dependent RNA polymerase catalyzes the transcription of DNA into RNA using the four ribonucleoside triphosphates as substrates. The protein is DNA-directed RNA polymerase subunit beta of Prochlorococcus marinus (strain SARG / CCMP1375 / SS120).